The sequence spans 436 residues: 3-phosphoshikimate 1-carboxyvinyltransferase (436 aa).

3-phosphoshikimate is bound by residues lysine 23, serine 24, and arginine 28. Lysine 23 lines the phosphoenolpyruvate pocket. 2 residues coordinate phosphoenolpyruvate: glycine 97 and arginine 126. Residues serine 171, glutamine 173, aspartate 323, and lysine 350 each contribute to the 3-phosphoshikimate site. Glutamine 173 lines the phosphoenolpyruvate pocket. The Proton acceptor role is filled by aspartate 323. Residues arginine 354 and arginine 396 each coordinate phosphoenolpyruvate.

Belongs to the EPSP synthase family. As to quaternary structure, monomer.

The protein resides in the cytoplasm. It catalyses the reaction 3-phosphoshikimate + phosphoenolpyruvate = 5-O-(1-carboxyvinyl)-3-phosphoshikimate + phosphate. Its pathway is metabolic intermediate biosynthesis; chorismate biosynthesis; chorismate from D-erythrose 4-phosphate and phosphoenolpyruvate: step 6/7. Functionally, catalyzes the transfer of the enolpyruvyl moiety of phosphoenolpyruvate (PEP) to the 5-hydroxyl of shikimate-3-phosphate (S3P) to produce enolpyruvyl shikimate-3-phosphate and inorganic phosphate. The chain is 3-phosphoshikimate 1-carboxyvinyltransferase from Prochlorococcus marinus (strain AS9601).